The chain runs to 160 residues: MAPKGSQRVVNKIVAENRKARFNYEIIDTYEAGLVLTGTEVKSLREGKANIAESYASDEGDEIWLINSHLPEYLQANRFNHEPRRRRKLLLNKREINRLRAGINRDGMTLVPLKVYFNEKGRAKLELALAKGKKLHDKRETEKERDWNRQKSRLLKGNSQ.

A disordered region spans residues 133-160 (KKLHDKRETEKERDWNRQKSRLLKGNSQ). Positions 137-149 (DKRETEKERDWNR) are enriched in basic and acidic residues.

The protein belongs to the SmpB family.

Its subcellular location is the cytoplasm. In terms of biological role, required for rescue of stalled ribosomes mediated by trans-translation. Binds to transfer-messenger RNA (tmRNA), required for stable association of tmRNA with ribosomes. tmRNA and SmpB together mimic tRNA shape, replacing the anticodon stem-loop with SmpB. tmRNA is encoded by the ssrA gene; the 2 termini fold to resemble tRNA(Ala) and it encodes a 'tag peptide', a short internal open reading frame. During trans-translation Ala-aminoacylated tmRNA acts like a tRNA, entering the A-site of stalled ribosomes, displacing the stalled mRNA. The ribosome then switches to translate the ORF on the tmRNA; the nascent peptide is terminated with the 'tag peptide' encoded by the tmRNA and targeted for degradation. The ribosome is freed to recommence translation, which seems to be the essential function of trans-translation. The protein is SsrA-binding protein of Agrobacterium fabrum (strain C58 / ATCC 33970) (Agrobacterium tumefaciens (strain C58)).